Reading from the N-terminus, the 122-residue chain is MIQPQTLLNVADNSGARELMCIRIIGASNRRYAHIGDVIVAVIKEAVPNMPLARSEVVRAVIVRTCKELKRDNGMIIRYDDNAAVVIDQEGNPKGTRIFGAIARELRQLNFTKIVSLAPEVL.

Belongs to the universal ribosomal protein uL14 family. Part of the 50S ribosomal subunit.

Its subcellular location is the plastid. It is found in the chloroplast. Functionally, binds to 23S rRNA. This chain is Large ribosomal subunit protein uL14c, found in Daucus carota (Wild carrot).